The chain runs to 102 residues: Putative UPF0320 protein YMR326C (102 aa).

It belongs to the UPF0320 family.

The polypeptide is Putative UPF0320 protein YMR326C (Saccharomyces cerevisiae (strain ATCC 204508 / S288c) (Baker's yeast)).